Reading from the N-terminus, the 373-residue chain is Protein MGF 360-6L (373 aa).

Belongs to the asfivirus MGF 360 family.

Plays a role in virus cell tropism, and may be required for efficient virus replication in macrophages. The chain is Protein MGF 360-6L from Ornithodoros (relapsing fever ticks).